The chain runs to 269 residues: Ribonuclease HII (269 aa).

Residues 83–269 (YLIAGVDEVG…HRMSFLTNIL (187 aa)) enclose the RNase H type-2 domain. A divalent metal cation is bound by residues D89, E90, and D185.

The protein belongs to the RNase HII family. The cofactor is Mn(2+). Mg(2+) is required as a cofactor.

The protein localises to the cytoplasm. It catalyses the reaction Endonucleolytic cleavage to 5'-phosphomonoester.. Endonuclease that specifically degrades the RNA of RNA-DNA hybrids. In Clostridium botulinum (strain Loch Maree / Type A3), this protein is Ribonuclease HII.